A 742-amino-acid chain; its full sequence is Phosphoribosylformylglycinamidine synthase subunit PurL (742 aa).

Histidine 54 is an active-site residue. ATP contacts are provided by tyrosine 57 and lysine 96. Glutamate 98 lines the Mg(2+) pocket. Residues 99 to 102 (SHNH) and arginine 121 contribute to the substrate site. Histidine 100 (proton acceptor) is an active-site residue. Aspartate 122 is a binding site for Mg(2+). Glutamine 245 contributes to the substrate binding site. Mg(2+) is bound at residue aspartate 273. 317 to 319 (ESQ) is a binding site for substrate. The ATP site is built by aspartate 500 and glycine 537. Position 538 (asparagine 538) interacts with Mg(2+). Serine 540 contacts substrate.

Belongs to the FGAMS family. Monomer. Part of the FGAM synthase complex composed of 1 PurL, 1 PurQ and 2 PurS subunits.

It localises to the cytoplasm. It catalyses the reaction N(2)-formyl-N(1)-(5-phospho-beta-D-ribosyl)glycinamide + L-glutamine + ATP + H2O = 2-formamido-N(1)-(5-O-phospho-beta-D-ribosyl)acetamidine + L-glutamate + ADP + phosphate + H(+). It functions in the pathway purine metabolism; IMP biosynthesis via de novo pathway; 5-amino-1-(5-phospho-D-ribosyl)imidazole from N(2)-formyl-N(1)-(5-phospho-D-ribosyl)glycinamide: step 1/2. Part of the phosphoribosylformylglycinamidine synthase complex involved in the purines biosynthetic pathway. Catalyzes the ATP-dependent conversion of formylglycinamide ribonucleotide (FGAR) and glutamine to yield formylglycinamidine ribonucleotide (FGAM) and glutamate. The FGAM synthase complex is composed of three subunits. PurQ produces an ammonia molecule by converting glutamine to glutamate. PurL transfers the ammonia molecule to FGAR to form FGAM in an ATP-dependent manner. PurS interacts with PurQ and PurL and is thought to assist in the transfer of the ammonia molecule from PurQ to PurL. The chain is Phosphoribosylformylglycinamidine synthase subunit PurL from Geobacillus thermodenitrificans (strain NG80-2).